The primary structure comprises 163 residues: MMRFTIIVIAFLLIIQSLEEEHILVYAHEGGEAGHKSLDYQGDQDSSTLHPKELFDAPRKVRFGRTTRAEKEQVTAMNNDSWSFKISGEHKQTNILADHDTTKNTFCKKMMIIVNDLTSLPTLEPSTSTNDMEKLARLLRDDYPIYSKPRRKPPVNNRAPDKF.

An N-terminal signal peptide occupies residues 1–20; that stretch reads MMRFTIIVIAFLLIIQSLEE. Residues 21–141 constitute a propeptide that is removed on maturation; sequence EHILVYAHEG…MEKLARLLRD (121 aa). Tyr-143 carries the post-translational modification Sulfotyrosine. Residues 144–163 are disordered; the sequence is PIYSKPRRKPPVNNRAPDKF. Position 154 is a hydroxyproline (Pro-154). A propeptide spanning residues 158–163 is cleaved from the precursor; that stretch reads RAPDKF.

Belongs to the RGF family. Binds to LRR receptor-like serine/threonine-protein kinases RGI1, RGI2 and RGI3 to trigger their dimerization with SERK proteins and subsequent signaling. In terms of tissue distribution, expressed in roots, specifically in the root apical meristem (RAM).

It is found in the secreted. In terms of biological role, signaling peptide (root growth factor) required during root gravitropism in a PIN2-traffic dependent manner, thus influencing the formation of auxin gradients. Maintains the postembryonic root stem cell niche. The polypeptide is Protein GOLVEN 3 (Arabidopsis thaliana (Mouse-ear cress)).